Reading from the N-terminus, the 604-residue chain is Beta-alanine transporter (604 aa).

At 1–23 (MDFDEVLREVGSFGLYQKVIICS) the chain is on the cytoplasmic side. A helical transmembrane segment spans residues 24–44 (VLLPAALPCAFHAYSQLFIAA). Over 45–151 (TPQHFCRVPE…QEWNLVCDRS (107 aa)) the chain is Extracellular. N-linked (GlcNAc...) asparagine glycosylation is found at asparagine 68 and asparagine 88. Residues 152 to 172 (FLVTLALVVFGVGGLLGNYVF) traverse the membrane as a helical segment. Over 173-182 (GYLVDLWGRR) the chain is Cytoplasmic. The chain crosses the membrane as a helical span at residues 183-203 (PSFYAYLLLEIIACAASAFAW). Residues 204-212 (NYYTWLGLR) are Extracellular-facing. A helical transmembrane segment spans residues 213 to 233 (FVVGLTVPAILASPYVLAIEL). Over 234-243 (VGPERRVFCT) the chain is Cytoplasmic. A helical transmembrane segment spans residues 244–264 (IVSNIAYSLGLVVLAGVIYIV). The Extracellular portion of the chain corresponds to 265 to 268 (RDWR). Residues 269–289 (ELSLAVSMPLLMLFSCFFVLP) traverse the membrane as a helical segment. Residues 290-362 (ESPRWLMAVG…FRGPNMRRKT (73 aa)) are Cytoplasmic-facing. A helical membrane pass occupies residues 363 to 383 (LIITLIWFANTSVYVGLSYYA). Over 384-390 (PALGGDE) the chain is Extracellular. A helical transmembrane segment spans residues 391–411 (IWNFFLAGAVELPTYLLLWPG). At 412 to 418 (LSYFGRR) the chain is on the cytoplasmic side. The helical transmembrane segment at 419 to 439 (WILFISMLVGGVACVATFLYP) threads the bilayer. Over 440–442 (DIT) the chain is Extracellular. The chain crosses the membrane as a helical span at residues 443 to 463 (LLLYCVGKMGISSSFVVLPLM). Over 464–473 (ASELYPTVVR) the chain is Cytoplasmic. The helical transmembrane segment at 474 to 494 (GLGMSFSSVISMVGPIVIPMI) threads the bilayer. Residues 495 to 501 (NHMGQQM) are Extracellular-facing. A helical membrane pass occupies residues 502–522 (LVLPLIVMGALLILGGFASLL). Topologically, residues 523 to 604 (LPETRNRNLP…SICKNEMRTL (82 aa)) are cytoplasmic.

This sequence belongs to the major facilitator (TC 2.A.1) superfamily. Organic cation transporter (TC 2.A.1.19) family. In terms of tissue distribution, expressed in the head and predominantly in the retinal pigment cells of the compound eye.

It localises to the cell membrane. Beta-alanine transporter required for the uptake of beta-alanine by the glia. Required for the recycling process of the neurotransmitter histamine in photoreceptor neurons of the compound eye and therefore for photoreceptor synaptic transmission. Following histamine release from photoreceptors and its uptake by glia, histamine is conjugated to beta-alanine by e/Ebony to form the inactive metabolite, carcinine. This is Beta-alanine transporter from Drosophila melanogaster (Fruit fly).